A 75-amino-acid polypeptide reads, in one-letter code: Veswaprin-c (75 aa).

A signal peptide spans 1-24 (MSSGGLLLLLGLLTLWAELTPVSS). Positions 27–72 (RPKKPGLCPPRPQKPPCVRECKNDWRCPGERKCCRYGCIYECRDPI) constitute a WAP domain. Intrachain disulfides connect C34–C60, C43–C64, C47–C59, and C53–C68.

Belongs to the venom waprin family. Expressed by the venom gland.

Its subcellular location is the secreted. In terms of biological role, damages membranes of susceptible bacteria. Has no hemolytic activity. Not toxic to mice. Does not inhibit the proteinases elastase and cathepsin G. In Demansia vestigiata (Lesser black whip snake), this protein is Veswaprin-c.